The chain runs to 103 residues: Small ribosomal subunit protein uS10 (103 aa).

This sequence belongs to the universal ribosomal protein uS10 family. Part of the 30S ribosomal subunit.

Functionally, involved in the binding of tRNA to the ribosomes. The polypeptide is Small ribosomal subunit protein uS10 (Colwellia psychrerythraea (strain 34H / ATCC BAA-681) (Vibrio psychroerythus)).